A 347-amino-acid chain; its full sequence is Dual specificity mitogen-activated protein kinase kinase 3 (347 aa).

Methionine 1 carries the post-translational modification N-acetylmethionine. The span at 1 to 11 (MESPAASPPAS) shows a compositional bias: pro residues. Residues 1 to 45 (MESPAASPPASLPQTKGKSKRKKDLRISCVSKPPVSNPTPPRNLD) are disordered. Position 3 is a phosphoserine (serine 3). Positions 64-325 (LVTISELGRG…YLELMEHPFF (262 aa)) constitute a Protein kinase domain. ATP is bound by residues 70-78 (LGRGAYGVV) and lysine 93. The active-site Proton acceptor is the aspartate 190. Position 218 is a phosphoserine (serine 218). The residue at position 222 (threonine 222) is a Phosphothreonine.

This sequence belongs to the protein kinase superfamily. STE Ser/Thr protein kinase family. MAP kinase kinase subfamily. In terms of assembly, component of a signaling complex containing at least AKAP13, PKN1, MAPK14, ZAK and MAP2K3. Within this complex, AKAP13 interacts directly with PKN1, which in turn recruits MAPK14, MAP2K3 and ZAK. Binds to DYRK1B/MIRK and increases its kinase activity. Part of a complex with MAP3K3, RAC1 and CCM2. Interacts with ARRB1. Autophosphorylated. Phosphorylation on Ser-218 and Thr-222 by MAP kinase kinase kinases positively regulates the kinase activity. Phosphorylated by TAOK2.

The catalysed reaction is L-seryl-[protein] + ATP = O-phospho-L-seryl-[protein] + ADP + H(+). It catalyses the reaction L-threonyl-[protein] + ATP = O-phospho-L-threonyl-[protein] + ADP + H(+). The enzyme catalyses L-tyrosyl-[protein] + ATP = O-phospho-L-tyrosyl-[protein] + ADP + H(+). Activated by dual phosphorylation on Ser-218 and Thr-222. Dual specificity kinase. Is activated by cytokines and environmental stress in vivo. Catalyzes the concomitant phosphorylation of a threonine and a tyrosine residue in the MAP kinase p38. Part of a signaling cascade that begins with the activation of the adrenergic receptor ADRA1B and leads to the activation of MAPK14. The sequence is that of Dual specificity mitogen-activated protein kinase kinase 3 (Map2k3) from Mus musculus (Mouse).